The primary structure comprises 138 residues: Large ribosomal subunit protein uL16 (138 aa).

This sequence belongs to the universal ribosomal protein uL16 family. In terms of assembly, part of the 50S ribosomal subunit.

Binds 23S rRNA and is also seen to make contacts with the A and possibly P site tRNAs. This is Large ribosomal subunit protein uL16 from Rhodospirillum rubrum (strain ATCC 11170 / ATH 1.1.1 / DSM 467 / LMG 4362 / NCIMB 8255 / S1).